The chain runs to 317 residues: Methionyl-tRNA formyltransferase (317 aa).

Position 112 to 115 (112 to 115) interacts with (6S)-5,6,7,8-tetrahydrofolate; sequence SLLP.

This sequence belongs to the Fmt family.

It carries out the reaction L-methionyl-tRNA(fMet) + (6R)-10-formyltetrahydrofolate = N-formyl-L-methionyl-tRNA(fMet) + (6S)-5,6,7,8-tetrahydrofolate + H(+). Attaches a formyl group to the free amino group of methionyl-tRNA(fMet). The formyl group appears to play a dual role in the initiator identity of N-formylmethionyl-tRNA by promoting its recognition by IF2 and preventing the misappropriation of this tRNA by the elongation apparatus. In Mesorhizobium japonicum (strain LMG 29417 / CECT 9101 / MAFF 303099) (Mesorhizobium loti (strain MAFF 303099)), this protein is Methionyl-tRNA formyltransferase.